The chain runs to 406 residues: DNA repair protein rad60 (406 aa).

In terms of assembly, interacts with rfp1 and smc5. Post-translationally, phosphorylated by cds1.

The protein localises to the nucleus. In terms of biological role, required for repair of DNA double strand breaks which occur during replication, or induced by UV or gamma radiation, via recombination between sister chromatids. This has a subsequent role in the maintenance of chromosome structure. May work in conjunction with the Smc5-Smc6 complex. This is DNA repair protein rad60 (rad60) from Schizosaccharomyces pombe (strain 972 / ATCC 24843) (Fission yeast).